The chain runs to 342 residues: Holliday junction branch migration complex subunit RuvB (342 aa).

The segment at 1 to 185 (MRKDYLNSNK…FGINTRLAYY (185 aa)) is large ATPase domain (RuvB-L). ATP is bound by residues leucine 24, arginine 25, glycine 66, lysine 69, threonine 70, threonine 71, 132–134 (EDF), arginine 175, tyrosine 185, and arginine 222. Residue threonine 70 participates in Mg(2+) binding. The tract at residues 186-256 (DVTLLTQIVK…IAQMALKALD (71 aa)) is small ATPAse domain (RuvB-S). The segment at 259–342 (EDGLDEMDNR…PPQRAGTLFE (84 aa)) is head domain (RuvB-H). Residues arginine 314 and arginine 319 each coordinate DNA.

This sequence belongs to the RuvB family. As to quaternary structure, homohexamer. Forms an RuvA(8)-RuvB(12)-Holliday junction (HJ) complex. HJ DNA is sandwiched between 2 RuvA tetramers; dsDNA enters through RuvA and exits via RuvB. An RuvB hexamer assembles on each DNA strand where it exits the tetramer. Each RuvB hexamer is contacted by two RuvA subunits (via domain III) on 2 adjacent RuvB subunits; this complex drives branch migration. In the full resolvosome a probable DNA-RuvA(4)-RuvB(12)-RuvC(2) complex forms which resolves the HJ.

It is found in the cytoplasm. The enzyme catalyses ATP + H2O = ADP + phosphate + H(+). Functionally, the RuvA-RuvB-RuvC complex processes Holliday junction (HJ) DNA during genetic recombination and DNA repair, while the RuvA-RuvB complex plays an important role in the rescue of blocked DNA replication forks via replication fork reversal (RFR). RuvA specifically binds to HJ cruciform DNA, conferring on it an open structure. The RuvB hexamer acts as an ATP-dependent pump, pulling dsDNA into and through the RuvAB complex. RuvB forms 2 homohexamers on either side of HJ DNA bound by 1 or 2 RuvA tetramers; 4 subunits per hexamer contact DNA at a time. Coordinated motions by a converter formed by DNA-disengaged RuvB subunits stimulates ATP hydrolysis and nucleotide exchange. Immobilization of the converter enables RuvB to convert the ATP-contained energy into a lever motion, pulling 2 nucleotides of DNA out of the RuvA tetramer per ATP hydrolyzed, thus driving DNA branch migration. The RuvB motors rotate together with the DNA substrate, which together with the progressing nucleotide cycle form the mechanistic basis for DNA recombination by continuous HJ branch migration. Branch migration allows RuvC to scan DNA until it finds its consensus sequence, where it cleaves and resolves cruciform DNA. The sequence is that of Holliday junction branch migration complex subunit RuvB from Amoebophilus asiaticus (strain 5a2).